An 876-amino-acid chain; its full sequence is MAKSAQGRKKEPTPMMRQYLEVKERYPEYVLLFRVGDFYETFLDDAVTVSAALNIVLTKRSNGSAGEIPLAGFPHHASEGYIAKLVTKGFKVAVCDQVEDPALAKGIVKREITDIVTPGITYSDKILDDRHNNYLCAVALFKRGREHLAGVAFVDVTTAEFRMTELPVAELKDFLQSLHPSEILISSRDKELRDSLAKSMNTLFTVLDEWMFSAEQASQVLENHFKTHSLKGFGIDGVEGGRIAAGAILQYLEEAKQGSLKYLVRIGLVESAETMTLDIQTRRNLEIISSMQDGSLNGSLLEVIDRTKNPMGARLLRRWLLHPLRKLEAVVQRHDAVEELLESDSMREESRQLLGGIIDLERALARIATSRAMPREVRLLGSSFALIPQLKAMLASCEAQRLRHLADRLDSLPELAETIERALDPEASGTLRDGGYIRAGYHEELDELRAISSGARDRLLEIQQAERSKTSISTLKVQYNKVFGYYIEVSRANSDKVPEYYEKKQTLVNAERYTIPALKEYEEKILTAEEKSQFLEHRLFQELCAAVAAEAASIQKTAAALAELDCLACFASCADEYRYCRPAMNEGTELSITGGRHPVLERILGADEPYVANDCRVGSDQQLLIITGPNMAGKSSYLRQAGLVVLLAQVGSFVPAESAEIGLVDRIFTRVGASDNLTSGESTFLVEMNEAASILNNATERSLLLLDEIGRGTSTFDGMSIAWSMCEFIHDRLRARTLFATHYHELAELESRFERIVNFNATVVETADTVIFLRKIVRGASDNSYGIEVAKMAGMPPEVIERAREILAGMERREVEVPTQREAPPRVVSQQISLFEEEESRLRKALSGIDINRLTPLDAMMELKRLQDIALGKSKA.

Residue 628-635 (GPNMAGKS) coordinates ATP.

This sequence belongs to the DNA mismatch repair MutS family.

In terms of biological role, this protein is involved in the repair of mismatches in DNA. It is possible that it carries out the mismatch recognition step. This protein has a weak ATPase activity. The polypeptide is DNA mismatch repair protein MutS (Chlorobaculum parvum (strain DSM 263 / NCIMB 8327) (Chlorobium vibrioforme subsp. thiosulfatophilum)).